The primary structure comprises 237 residues: 7-cyano-7-deazaguanine synthase (237 aa).

Position 15-25 (15-25 (LSGGMDSTVCA)) interacts with ATP. Residues Cys-197, Cys-205, Cys-208, and Cys-211 each coordinate Zn(2+).

It belongs to the QueC family. Zn(2+) serves as cofactor.

The enzyme catalyses 7-carboxy-7-deazaguanine + NH4(+) + ATP = 7-cyano-7-deazaguanine + ADP + phosphate + H2O + H(+). It functions in the pathway purine metabolism; 7-cyano-7-deazaguanine biosynthesis. Catalyzes the ATP-dependent conversion of 7-carboxy-7-deazaguanine (CDG) to 7-cyano-7-deazaguanine (preQ(0)). This is 7-cyano-7-deazaguanine synthase from Koribacter versatilis (strain Ellin345).